The following is a 429-amino-acid chain: Enolase (429 aa).

Gln164 contributes to the (2R)-2-phosphoglycerate binding site. Glu206 (proton donor) is an active-site residue. Mg(2+)-binding residues include Asp243, Glu286, and Asp313. (2R)-2-phosphoglycerate is bound by residues Lys338, Arg367, Ser368, and Lys389. Catalysis depends on Lys338, which acts as the Proton acceptor.

The protein belongs to the enolase family. Mg(2+) is required as a cofactor.

The protein resides in the cytoplasm. It is found in the secreted. Its subcellular location is the cell surface. The enzyme catalyses (2R)-2-phosphoglycerate = phosphoenolpyruvate + H2O. It functions in the pathway carbohydrate degradation; glycolysis; pyruvate from D-glyceraldehyde 3-phosphate: step 4/5. In terms of biological role, catalyzes the reversible conversion of 2-phosphoglycerate (2-PG) into phosphoenolpyruvate (PEP). It is essential for the degradation of carbohydrates via glycolysis. The protein is Enolase of Thermotoga sp. (strain RQ2).